The primary structure comprises 65 residues: Period circadian protein (65 aa).

Positions 1–65 are disordered; that stretch reads EGSGGSGSSG…VTLTESLLNK (65 aa). A compositionally biased stretch (polar residues) spans 18–28; it reads VRMSSVTNTSN. Residues 29–38 are compositionally biased toward low complexity; it reads AGTGTSAGDN. Residues 56 to 65 are compositionally biased toward polar residues; the sequence is VTLTESLLNK.

In terms of assembly, forms a heterodimer with timeless (TIM); the complex then translocates into the nucleus. Post-translationally, phosphorylated with a circadian rhythmicity, probably by the double-time protein (dbt). Phosphorylation could be implicated in the stability of per monomer and in the formation of heterodimer per-tim.

It localises to the nucleus. The protein localises to the cytoplasm. It is found in the perinuclear region. Its function is as follows. Essential for biological clock functions. Determines the period length of circadian and ultradian rhythms; an increase in PER dosage leads to shortened circadian rhythms and a decrease leads to lengthened circadian rhythms. Essential for the circadian rhythmicity of locomotor activity, eclosion behavior, and for the rhythmic component of the male courtship song that originates in the thoracic nervous system. The biological cycle depends on the rhythmic formation and nuclear localization of the TIM-PER complex. Light induces the degradation of TIM, which promotes elimination of PER. Nuclear activity of the heterodimer coordinatively regulates PER and TIM transcription through a negative feedback loop. Behaves as a negative element in circadian transcriptional loop. Does not appear to bind DNA, suggesting indirect transcriptional inhibition. The chain is Period circadian protein (per) from Drosophila mojavensis (Fruit fly).